Consider the following 260-residue polypeptide: UPF0246 protein BTH_I1090 (260 aa).

This sequence belongs to the UPF0246 family.

In Burkholderia thailandensis (strain ATCC 700388 / DSM 13276 / CCUG 48851 / CIP 106301 / E264), this protein is UPF0246 protein BTH_I1090.